Reading from the N-terminus, the 283-residue chain is Pantothenate synthetase (283 aa).

30 to 37 (MGNLHAGH) lines the ATP pocket. H37 functions as the Proton donor in the catalytic mechanism. Position 61 (Q61) interacts with (R)-pantoate. Residue Q61 participates in beta-alanine binding. Residue 149–152 (GEKD) participates in ATP binding. Q155 lines the (R)-pantoate pocket. ATP contacts are provided by residues V178 and 186-189 (LSSR).

This sequence belongs to the pantothenate synthetase family. As to quaternary structure, homodimer.

The protein localises to the cytoplasm. It carries out the reaction (R)-pantoate + beta-alanine + ATP = (R)-pantothenate + AMP + diphosphate + H(+). It functions in the pathway cofactor biosynthesis; (R)-pantothenate biosynthesis; (R)-pantothenate from (R)-pantoate and beta-alanine: step 1/1. Catalyzes the condensation of pantoate with beta-alanine in an ATP-dependent reaction via a pantoyl-adenylate intermediate. The chain is Pantothenate synthetase from Pseudomonas aeruginosa (strain UCBPP-PA14).